The chain runs to 1225 residues: DNA-directed RNA polymerase subunit beta' (1225 aa).

4 residues coordinate Zn(2+): Cys60, Cys62, Cys75, and Cys78. Residues Asp450, Asp452, and Asp454 each contribute to the Mg(2+) site. Positions 818, 892, 899, and 902 each coordinate Zn(2+).

Belongs to the RNA polymerase beta' chain family. The RNAP catalytic core consists of 2 alpha, 1 beta, 1 beta' and 1 omega subunit. When a sigma factor is associated with the core the holoenzyme is formed, which can initiate transcription. Mg(2+) is required as a cofactor. The cofactor is Zn(2+).

It catalyses the reaction RNA(n) + a ribonucleoside 5'-triphosphate = RNA(n+1) + diphosphate. Its function is as follows. DNA-dependent RNA polymerase catalyzes the transcription of DNA into RNA using the four ribonucleoside triphosphates as substrates. The polypeptide is DNA-directed RNA polymerase subunit beta' (Streptococcus pneumoniae (strain P1031)).